The chain runs to 188 residues: ATP-dependent Clp protease proteolytic subunit 1 (188 aa).

Serine 90 serves as the catalytic Nucleophile. The active site involves histidine 115.

The protein belongs to the peptidase S14 family. As to quaternary structure, fourteen ClpP subunits assemble into 2 heptameric rings which stack back to back to give a disk-like structure with a central cavity, resembling the structure of eukaryotic proteasomes.

Its subcellular location is the cytoplasm. The enzyme catalyses Hydrolysis of proteins to small peptides in the presence of ATP and magnesium. alpha-casein is the usual test substrate. In the absence of ATP, only oligopeptides shorter than five residues are hydrolyzed (such as succinyl-Leu-Tyr-|-NHMec, and Leu-Tyr-Leu-|-Tyr-Trp, in which cleavage of the -Tyr-|-Leu- and -Tyr-|-Trp bonds also occurs).. In terms of biological role, cleaves peptides in various proteins in a process that requires ATP hydrolysis. Has a chymotrypsin-like activity. Plays a major role in the degradation of misfolded proteins. This chain is ATP-dependent Clp protease proteolytic subunit 1, found in Corynebacterium jeikeium (strain K411).